The sequence spans 155 residues: Endoribonuclease YbeY (155 aa).

Positions 110, 114, and 120 each coordinate Zn(2+).

It belongs to the endoribonuclease YbeY family. The cofactor is Zn(2+).

Its subcellular location is the cytoplasm. Single strand-specific metallo-endoribonuclease involved in late-stage 70S ribosome quality control and in maturation of the 3' terminus of the 16S rRNA. In Deinococcus radiodurans (strain ATCC 13939 / DSM 20539 / JCM 16871 / CCUG 27074 / LMG 4051 / NBRC 15346 / NCIMB 9279 / VKM B-1422 / R1), this protein is Endoribonuclease YbeY.